Reading from the N-terminus, the 611-residue chain is Oligoendopeptidase F homolog (611 aa).

Histidine 384 contacts Zn(2+). The active site involves glutamate 385. The Zn(2+) site is built by histidine 388 and histidine 391.

The protein belongs to the peptidase M3B family. Zn(2+) serves as cofactor.

This chain is Oligoendopeptidase F homolog (pepF), found in Mycoplasma pneumoniae (strain ATCC 29342 / M129 / Subtype 1) (Mycoplasmoides pneumoniae).